A 227-amino-acid chain; its full sequence is (S)-2-haloacid dehalogenase (227 aa).

Residue Asp-10 is the Nucleophile of the active site. An (S)-2-haloacid-binding positions include 11–12, Arg-41, and 118–119; these read LY and SN. The interval 175–180 is important for catalytic activity; the sequence is SSNAWD.

This sequence belongs to the HAD-like hydrolase superfamily. S-2-haloalkanoic acid dehalogenase family. Homotetramer.

It carries out the reaction an (S)-2-haloacid + H2O = a (2R)-2-hydroxycarboxylate + a halide anion + H(+). The enzyme catalyses (S)-2-chloropropanoate + H2O = (R)-lactate + chloride + H(+). Its function is as follows. Catalyzes the hydrolytic dehalogenation of small (S)-2-haloalkanoic acids to yield the corresponding (R)-2-hydroxyalkanoic acids. Acts on acids of short chain lengths, C(2) to C(4), with inversion of configuration at C-2. Active with 2-halogenated carboxylic acids and converts only the S-isomer (or L-isomer) of 2-chloropropionic acid with inversion of configuration to produce R-lactate (or D-isomer). This Pseudomonas putida (Arthrobacter siderocapsulatus) protein is (S)-2-haloacid dehalogenase.